The primary structure comprises 664 residues: Glycine--tRNA ligase beta subunit (664 aa).

This sequence belongs to the class-II aminoacyl-tRNA synthetase family. Tetramer of two alpha and two beta subunits.

It localises to the cytoplasm. The catalysed reaction is tRNA(Gly) + glycine + ATP = glycyl-tRNA(Gly) + AMP + diphosphate. The chain is Glycine--tRNA ligase beta subunit from Rickettsia africae (strain ESF-5).